We begin with the raw amino-acid sequence, 106 residues long: UPF0060 membrane protein Rleg2_1018 (106 aa).

4 consecutive transmembrane segments (helical) span residues 4 to 24 (IIYAFAAVFEIGGCFAFWAWL), 30 to 50 (VWWLAPGMVSLALFAWLLTLV), 58 to 78 (TFAAYGGIYIAASLLWLWLVE), and 86 to 106 (DIGGALVCLAGTSIILFGPRG).

The protein belongs to the UPF0060 family.

The protein resides in the cell inner membrane. This chain is UPF0060 membrane protein Rleg2_1018, found in Rhizobium leguminosarum bv. trifolii (strain WSM2304).